Consider the following 238-residue polypeptide: Sugar fermentation stimulation protein homolog (238 aa).

The protein belongs to the SfsA family.

The polypeptide is Sugar fermentation stimulation protein homolog (Brucella abortus (strain S19)).